The following is a 151-amino-acid chain: Large ribosomal subunit protein bL17 (151 aa).

Residues 118–151 (EAKQPPRKEKAKKPAPVQAEEASATPASEEKAQD) form a disordered region. Residues 131 to 144 (PAPVQAEEASATPA) are compositionally biased toward low complexity.

The protein belongs to the bacterial ribosomal protein bL17 family. Part of the 50S ribosomal subunit. Contacts protein L32.

In Syntrophobacter fumaroxidans (strain DSM 10017 / MPOB), this protein is Large ribosomal subunit protein bL17.